Here is a 415-residue protein sequence, read N- to C-terminus: Tyrosine--tRNA ligase (415 aa).

An L-tyrosine-binding site is contributed by Y34. The short motif at 39–48 is the 'HIGH' region element; that stretch reads PTADSLHLGH. Positions 164 and 168 each coordinate L-tyrosine. The 'KMSKS' region motif lies at 226-230; that stretch reads KFGKS. Residue K229 participates in ATP binding. The region spanning 348–415 is the S4 RNA-binding domain; that stretch reads KNIVDFLVDG…KKKYFLGKIK (68 aa).

The protein belongs to the class-I aminoacyl-tRNA synthetase family. TyrS type 1 subfamily. Homodimer.

The protein resides in the cytoplasm. The catalysed reaction is tRNA(Tyr) + L-tyrosine + ATP = L-tyrosyl-tRNA(Tyr) + AMP + diphosphate + H(+). Functionally, catalyzes the attachment of tyrosine to tRNA(Tyr) in a two-step reaction: tyrosine is first activated by ATP to form Tyr-AMP and then transferred to the acceptor end of tRNA(Tyr). This Leuconostoc citreum (strain KM20) protein is Tyrosine--tRNA ligase.